Reading from the N-terminus, the 265-residue chain is Tryptophan synthase alpha chain (265 aa).

Catalysis depends on proton acceptor residues Glu49 and Asp60.

The protein belongs to the TrpA family. In terms of assembly, tetramer of two alpha and two beta chains.

The enzyme catalyses (1S,2R)-1-C-(indol-3-yl)glycerol 3-phosphate + L-serine = D-glyceraldehyde 3-phosphate + L-tryptophan + H2O. It participates in amino-acid biosynthesis; L-tryptophan biosynthesis; L-tryptophan from chorismate: step 5/5. Functionally, the alpha subunit is responsible for the aldol cleavage of indoleglycerol phosphate to indole and glyceraldehyde 3-phosphate. This chain is Tryptophan synthase alpha chain, found in Cupriavidus metallidurans (strain ATCC 43123 / DSM 2839 / NBRC 102507 / CH34) (Ralstonia metallidurans).